Here is an 86-residue protein sequence, read N- to C-terminus: Small ribosomal subunit protein bS20 (86 aa).

This sequence belongs to the bacterial ribosomal protein bS20 family.

Its function is as follows. Binds directly to 16S ribosomal RNA. This is Small ribosomal subunit protein bS20 from Novosphingobium aromaticivorans (strain ATCC 700278 / DSM 12444 / CCUG 56034 / CIP 105152 / NBRC 16084 / F199).